Consider the following 82-residue polypeptide: Turripeptide Gdm9.1 (82 aa).

Residues 1–23 (MMAKLMITVMMVLLLSLQQGADG) form the signal peptide. Residues 24 to 46 (RSERWRKNQMAASRIMRNLITAR) constitute a propeptide that is removed on maturation. 4-hydroxyproline is present on residues proline 49 and proline 50. 3 disulfides stabilise this stretch: cysteine 53/cysteine 68, cysteine 58/cysteine 72, and cysteine 64/cysteine 79. Residues glutamate 60 and glutamate 63 each carry the 4-carboxyglutamate modification.

This sequence belongs to the Pg turripeptide superfamily. Expressed by the venom duct.

It is found in the secreted. This chain is Turripeptide Gdm9.1, found in Gemmula diomedea (Gem-turris).